The chain runs to 183 residues: MLGFVTGVLAISAHVIVSQPNEHSPVVVARETYGLRDVIFRRLRSYETDTASARAEEGTSDIEERSDHEIPPDFYKRLASTSTPYVANLSHKAQIAAQALRKDAERSKGALELLKKYAELEGKMDAPKEEKNHVDRLKAAAFKEWNEKGLNLDQVRVLFADNKRRTSKYENLIEKIVGEYEKS.

An N-terminal signal peptide occupies residues 1 to 18 (MLGFVTGVLAISAHVIVS). Positions 41-65 (RRLRSYETDTASARAEEGTSDIEER) match the RxLR-dEER motif. The N-linked (GlcNAc...) asparagine glycan is linked to Asn-88.

Belongs to the RxLR effector family.

The protein resides in the secreted. It is found in the host nucleus. The protein localises to the host cytoplasm. Functionally, secreted effector that dos not suppress the host cell death induced by cell death-inducing proteins. The polypeptide is Secreted RxLR effector protein 41 (Plasmopara viticola (Downy mildew of grapevine)).